Consider the following 600-residue polypeptide: Cytidine monophosphate-N-acetylneuraminic acid hydroxylase (600 aa).

One can recognise a Rieske domain in the interval 9-107 (LSPVEVASLK…VEMDENNRLL (99 aa)). 4 residues coordinate [2Fe-2S] cluster: Cys-49, His-51, Cys-70, and His-73.

This sequence belongs to the CMP-Neu5Ac hydroxylase family. [2Fe-2S] cluster serves as cofactor.

It is found in the cytoplasm. The catalysed reaction is CMP-N-acetyl-beta-neuraminate + 2 Fe(II)-[cytochrome b5] + O2 + 2 H(+) = CMP-N-glycoloyl-beta-neuraminate + 2 Fe(III)-[cytochrome b5] + H2O. It participates in amino-sugar metabolism; N-acetylneuraminate metabolism. Functionally, sialic acids are components of carbohydrate chains of glycoconjugates and are involved in cell-cell recognition and cell-pathogen interactions. Catalyzes the conversion of CMP-N-acetylneuraminic acid (CMP-Neu5Ac) into its hydroxylated derivative CMP-N-glycolylneuraminic acid (CMP-Neu5Gc), a sialic acid abundantly expressed at the surface of many cells. The chain is Cytidine monophosphate-N-acetylneuraminic acid hydroxylase (CMAH) from Gorilla gorilla gorilla (Western lowland gorilla).